The chain runs to 316 residues: Pantothenate kinase (316 aa).

95–102 (GSVAVGKS) lines the ATP pocket.

It belongs to the prokaryotic pantothenate kinase family.

The protein localises to the cytoplasm. The catalysed reaction is (R)-pantothenate + ATP = (R)-4'-phosphopantothenate + ADP + H(+). It functions in the pathway cofactor biosynthesis; coenzyme A biosynthesis; CoA from (R)-pantothenate: step 1/5. In Salmonella agona (strain SL483), this protein is Pantothenate kinase.